Consider the following 428-residue polypeptide: Kynureninase (428 aa).

Pyridoxal 5'-phosphate is bound by residues T104, T105, 132-135, D213, H216, and Y238; that span reads FPSD. K239 is modified (N6-(pyridoxal phosphate)lysine). The pyridoxal 5'-phosphate site is built by W267 and T295.

This sequence belongs to the kynureninase family. In terms of assembly, homodimer. Pyridoxal 5'-phosphate serves as cofactor.

It carries out the reaction L-kynurenine + H2O = anthranilate + L-alanine + H(+). The catalysed reaction is 3-hydroxy-L-kynurenine + H2O = 3-hydroxyanthranilate + L-alanine + H(+). The protein operates within amino-acid degradation; L-kynurenine degradation; L-alanine and anthranilate from L-kynurenine: step 1/1. It participates in cofactor biosynthesis; NAD(+) biosynthesis; quinolinate from L-kynurenine: step 2/3. Functionally, catalyzes the cleavage of L-kynurenine (L-Kyn) and L-3-hydroxykynurenine (L-3OHKyn) into anthranilic acid (AA) and 3-hydroxyanthranilic acid (3-OHAA), respectively. The polypeptide is Kynureninase (Bacillus cereus (strain ZK / E33L)).